The chain runs to 219 residues: Small ribosomal subunit protein uS5 (219 aa).

A disordered region spans residues Met-1 to Ala-32. The 64-residue stretch at Leu-68–Ile-131 folds into the S5 DRBM domain.

It belongs to the universal ribosomal protein uS5 family. In terms of assembly, part of the 30S ribosomal subunit. Contacts protein S4.

With S4 and S12 plays an important role in translational accuracy. This chain is Small ribosomal subunit protein uS5 (rps5), found in Cenarchaeum symbiosum (strain A).